Consider the following 74-residue polypeptide: Exodeoxyribonuclease 7 small subunit (74 aa).

It belongs to the XseB family. As to quaternary structure, heterooligomer composed of large and small subunits.

The protein resides in the cytoplasm. It carries out the reaction Exonucleolytic cleavage in either 5'- to 3'- or 3'- to 5'-direction to yield nucleoside 5'-phosphates.. Functionally, bidirectionally degrades single-stranded DNA into large acid-insoluble oligonucleotides, which are then degraded further into small acid-soluble oligonucleotides. The sequence is that of Exodeoxyribonuclease 7 small subunit from Ruthia magnifica subsp. Calyptogena magnifica.